The primary structure comprises 237 residues: Protein GrpE (237 aa).

2 disordered regions span residues 1 to 52 (MSGD…RLQQ) and 200 to 237 (KVSM…QPGV). Over residues 27 to 40 (ASINSDEGQSSAQS) the composition is skewed to polar residues. Low complexity predominate over residues 204 to 218 (GPGPQSGASPSSAQP).

Belongs to the GrpE family. Homodimer.

Its subcellular location is the cytoplasm. Functionally, participates actively in the response to hyperosmotic and heat shock by preventing the aggregation of stress-denatured proteins, in association with DnaK and GrpE. It is the nucleotide exchange factor for DnaK and may function as a thermosensor. Unfolded proteins bind initially to DnaJ; upon interaction with the DnaJ-bound protein, DnaK hydrolyzes its bound ATP, resulting in the formation of a stable complex. GrpE releases ADP from DnaK; ATP binding to DnaK triggers the release of the substrate protein, thus completing the reaction cycle. Several rounds of ATP-dependent interactions between DnaJ, DnaK and GrpE are required for fully efficient folding. This Prochlorococcus marinus (strain MIT 9313) protein is Protein GrpE.